A 297-amino-acid polypeptide reads, in one-letter code: tRNA dimethylallyltransferase (297 aa).

Position 10 to 17 (10 to 17) interacts with ATP; the sequence is APTGAGKT. Substrate is bound at residue 12-17; that stretch reads TGAGKT. The interval 34 to 37 is interaction with substrate tRNA; that stretch reads DSRQ.

The protein belongs to the IPP transferase family. As to quaternary structure, monomer. It depends on Mg(2+) as a cofactor.

The enzyme catalyses adenosine(37) in tRNA + dimethylallyl diphosphate = N(6)-dimethylallyladenosine(37) in tRNA + diphosphate. Functionally, catalyzes the transfer of a dimethylallyl group onto the adenine at position 37 in tRNAs that read codons beginning with uridine, leading to the formation of N6-(dimethylallyl)adenosine (i(6)A). This is tRNA dimethylallyltransferase from Leptospira interrogans serogroup Icterohaemorrhagiae serovar Lai (strain 56601).